The chain runs to 370 residues: Aldo-keto reductase dtxS3 (370 aa).

Residue Asp78 coordinates NADP(+). Catalysis depends on Tyr83, which acts as the Proton donor. His174 is a binding site for substrate. Residues 204–205, Gln230, 259–269, and 333–341 contribute to the NADP(+) site; these read SS, GPLASGRLARR, and GSVGRIEEA.

It belongs to the aldo/keto reductase family.

Its pathway is secondary metabolite biosynthesis. Aldo-keto reductase; part of the gene cluster that mediates the biosynthesis of destruxins, insecticidal cyclic hexadepsipeptides which induce flaccid paralysis and visceral muscle contraction in insects through targeting the calcium channels and vacuolar-type ATPases. The aldo-keto reductase dtxS3 converts alpha-ketoisocaproic acid from deaminated leucine into alpha-hydroxyisocaproic acid (HIC), which is the first substrate for destruxin assembly by dtxS1. L-aspartate decarboxylase dtxS4 converts aspartic acid into beta-alanine, the last substrate for the destruxin assembly line performed by dtxS1. The nonribosomal peptide synthetase dtxS1 synthesizes destruxins B and B2, whereas the cytochrome P450 monooxygenase dtxS2 is required to convert destruxin B into other destruxin derivatives, including destructins C, D, A and E. Destruxin E-diol (ED) is further produced in a non-enzymatic manner from destruxin E. Destruxins play an important role in virulence and escape from insect host immune defenses. This chain is Aldo-keto reductase dtxS3, found in Metarhizium robertsii (strain ARSEF 23 / ATCC MYA-3075) (Metarhizium anisopliae (strain ARSEF 23)).